A 503-amino-acid chain; its full sequence is Arabinose import ATP-binding protein AraG 1 (503 aa).

ABC transporter domains follow at residues 5 to 240 (LRFD…MVGR) and 251 to 497 (RALG…LPQT). 37-44 (GENGAGKS) provides a ligand contact to ATP.

This sequence belongs to the ABC transporter superfamily. Arabinose importer (TC 3.A.1.2.2) family. The complex is composed of two ATP-binding proteins (AraG), two transmembrane proteins (AraH) and a solute-binding protein (AraF).

The protein localises to the cell inner membrane. It catalyses the reaction L-arabinose(out) + ATP + H2O = L-arabinose(in) + ADP + phosphate + H(+). Its function is as follows. Part of the ABC transporter complex AraFGH involved in arabinose import. Responsible for energy coupling to the transport system. This is Arabinose import ATP-binding protein AraG 1 from Burkholderia lata (strain ATCC 17760 / DSM 23089 / LMG 22485 / NCIMB 9086 / R18194 / 383).